Consider the following 347-residue polypeptide: NADH-ubiquinone oxidoreductase chain 2 (347 aa).

10 consecutive transmembrane segments (helical) span residues 13 to 33, 59 to 79, 84 to 104, 111 to 131, 149 to 169, 178 to 198, 201 to 221, 240 to 260, 276 to 296, and 326 to 346; these read IILGTSIVITSSHWLTVWIGF, YFLIQATASMLLMLAVTINLL, WAVSNMIDPLALTIMTLALAM, FHFWVPEVTQGVPLLSGLILL, IDPTLILTMSILSVLVGGWGG, IMAYSSISHMGWMTAILIYNP, TILNLLLYIMMTSTTFILLII, IAIIILTTMLSLGGLPPLTGF, IALSLFMAMAALLNLYFYTRL, and LSPLIIISTMILPLTPTMSAL.

The protein belongs to the complex I subunit 2 family. As to quaternary structure, core subunit of respiratory chain NADH dehydrogenase (Complex I) which is composed of 45 different subunits. Interacts with TMEM242.

Its subcellular location is the mitochondrion inner membrane. The catalysed reaction is a ubiquinone + NADH + 5 H(+)(in) = a ubiquinol + NAD(+) + 4 H(+)(out). Core subunit of the mitochondrial membrane respiratory chain NADH dehydrogenase (Complex I) that is believed to belong to the minimal assembly required for catalysis. Complex I functions in the transfer of electrons from NADH to the respiratory chain. The immediate electron acceptor for the enzyme is believed to be ubiquinone. In Chrotopterus auritus (Peters's woolly false vampire bat), this protein is NADH-ubiquinone oxidoreductase chain 2.